Consider the following 104-residue polypeptide: Alpha-amylase inhibitor HOE-467A (104 aa).

Positions 1–30 are cleaved as a signal peptide; the sequence is MRVRALRLAALVGAGAALALSPLAAGPASA. Cystine bridges form between cysteine 41-cysteine 57 and cysteine 75-cysteine 103.

Its function is as follows. Inhibits mammalian alpha-amylases specifically but has no action on plant and microbial alpha-amylases. Forms a tight stoichiometric 1:1 complex with alpha-amylase. The protein is Alpha-amylase inhibitor HOE-467A of Streptomyces tendae.